A 342-amino-acid polypeptide reads, in one-letter code: Prenyl transferase penC (342 aa).

A helical transmembrane segment spans residues 17–37 (LSYLTLTVGALALVVVLYISI). His110 provides a ligand contact to isopentenyl diphosphate. Residues Asp117 and Asp121 each contribute to the Mg(2+) site. Arg126 is a dimethylallyl diphosphate binding site. An N-linked (GlcNAc...) asparagine glycan is attached at Asn154. Residue Lys210 coordinates dimethylallyl diphosphate.

This sequence belongs to the FPP/GGPP synthase family.

Its subcellular location is the membrane. It functions in the pathway secondary metabolite biosynthesis. Its function is as follows. Prenyl transferase; part of the gene cluster that mediates the biosynthesis of the indole diterpenes penitrems. The geranylgeranyl diphosphate (GGPP) synthase penG catalyzes the first step in penitrem biosynthesis via conversion of farnesyl pyrophosphate and isopentyl pyrophosphate into geranylgeranyl pyrophosphate (GGPP). Condensation of indole-3-glycerol phosphate with GGPP by the prenyl transferase penC then forms 3-geranylgeranylindole (3-GGI). Epoxidation by the FAD-dependent monooxygenase penM leads to a epoxidized-GGI that is substrate of the terpene cyclase penB for cyclization to yield paspaline. Paspaline is subsequently converted to 13-desoxypaxilline by the cytochrome P450 monooxygenase penP, the latter being then converted to paxilline by the cytochrome P450 monooxygenase penQ. Paxilline is converted to beta-paxitriol via C-10 ketoreduction by the short-chain dehydrogenase PC-15 which can be monoprenylated at the C-20 by the indole diterpene prenyltransferase penD. A two-step elimination (acetylation and elimination) process performed by the O-acetyltransferase PC-16 and the P.simplicissimum ptmI-ortholog not yet identified in P.crustosum, leads to the production of the prenylated form of penijanthine. The FAD-linked oxidoreductase ptmO then converts the prenylated form of penijanthine into PC-M5 which is in turn transformed into PC-M4 by the aromatic dimethylallyltransferase PC-22. A series of oxidation steps involving 4 cytochrome P450 monooxygenases (PC-21, PC-05, PC-23, PC-20) and a FAD-dependent monooxygenase (PC-14) are required for the transformation of PC-M4 to penitrems A and E. Synthesis of these final products is proposed to proceed via penitrems D and C (PC-21, PC-05, PC-14) and penitrems B and F (PC-21, PC-05, PC-14, PC-23). The sequence is that of Prenyl transferase penC from Penicillium crustosum (Blue mold fungus).